A 105-amino-acid polypeptide reads, in one-letter code: MNEFFSVEPNYYLVLAAVLFTIGAAGVLVRRNAIVLFMCVELMLNAANLTLVTFSRINGDLNGQIMAFFVMVVAAAEVVVGLAIIMAIYRTRRSASVDDANLLKY.

Transmembrane regions (helical) follow at residues 9–29 (PNYY…GVLV), 34–54 (IVLF…LVTF), and 65–85 (IMAF…LAII).

It belongs to the complex I subunit 4L family. As to quaternary structure, NDH-1 is composed of 14 different subunits. Subunits NuoA, H, J, K, L, M, N constitute the membrane sector of the complex.

It is found in the cell membrane. The enzyme catalyses a quinone + NADH + 5 H(+)(in) = a quinol + NAD(+) + 4 H(+)(out). Functionally, NDH-1 shuttles electrons from NADH, via FMN and iron-sulfur (Fe-S) centers, to quinones in the respiratory chain. The immediate electron acceptor for the enzyme in this species is believed to be a menaquinone. Couples the redox reaction to proton translocation (for every two electrons transferred, four hydrogen ions are translocated across the cytoplasmic membrane), and thus conserves the redox energy in a proton gradient. The chain is NADH-quinone oxidoreductase subunit K from Salinispora tropica (strain ATCC BAA-916 / DSM 44818 / JCM 13857 / NBRC 105044 / CNB-440).